The sequence spans 643 residues: Leukocyte immunoglobulin-like receptor subfamily B member 5 (643 aa).

Positions 1–23 are cleaved as a signal peptide; it reads MTLTLSVLICLGLNVGPRTCVQA. Topologically, residues 24–458 are extracellular; the sequence is GTLPKPTLWA…PQSGLGRHLG (435 aa). Ig-like C2-type domains follow at residues 27–116, 111–228, 224–313, and 337–418; these read PKPT…LELV, DPLE…SLLI, PSLL…DPLD, and GENV…LVVS. C49 and C98 are oxidised to a cystine. An N-linked (GlcNAc...) asparagine glycan is attached at N139. Disulfide bonds link C144–C195 and C244–C295. N-linked (GlcNAc...) asparagine glycans are attached at residues N279 and N339. Cysteines 344 and 395 form a disulfide. Residues 417 to 433 are compositionally biased toward low complexity; it reads VSGPSGDPSLSPTGSTP. The interval 417–449 is disordered; the sequence is VSGPSGDPSLSPTGSTPTPGPEDQPLTPTGLDP. Residues 459–479 form a helical membrane-spanning segment; it reads VVTGVSVAFVLLLFLLLFLLL. Residues 480-643 lie on the Cytoplasmic side of the membrane; the sequence is RHRHQSKHRT…PSIYAPLAIH (164 aa). Positions 493 to 643 are disordered; it reads FYRPAGAAGP…PSIYAPLAIH (151 aa). S514 carries the post-translational modification Phosphoserine. Composition is skewed to basic and acidic residues over residues 531 to 549, 557 to 567, and 579 to 592; these read TQPKDGAEMDARQSPRDED, EVKHSRPRREM, and LDTKDTQAEEDRQM. The ITIM motif 1 motif lies at 605–610; that stretch reads VTYAQL. The span at 615–631 shows a compositional bias: basic and acidic residues; it reads LRREATEPPPSQEREPP. Positions 635 to 640 match the ITIM motif 2 motif; that stretch reads SIYAPL.

The protein resides in the membrane. In terms of biological role, may act as receptor for class I MHC antigens. This is Leukocyte immunoglobulin-like receptor subfamily B member 5 (LILRB5) from Pan troglodytes (Chimpanzee).